A 409-amino-acid chain; its full sequence is O-glucosyltransferase rumi (409 aa).

Residues 1-20 form the signal peptide; sequence MLINVVLIILLVGLNGKASG. Intrachain disulfides connect Cys62–Cys73, Cys71–Cys376, Cys118–Cys124, and Cys280–Cys303. Asp149 functions as the Proton donor/acceptor in the catalytic mechanism. The interaction with the consensus sequence C-X-S-X-[PA]-C in peptide substrates stretch occupies residues 190–195; the sequence is ATKLHP. Residues 227 to 231, Arg235, 274 to 276, and 292 to 296 each bind UDP-alpha-D-glucose; these read RGSRT, VSF, and AASFR. Positions 406–409 match the Prevents secretion from ER motif; it reads KDEL.

It belongs to the glycosyltransferase 90 family.

The protein localises to the endoplasmic reticulum lumen. It participates in protein modification; protein glycosylation. Functionally, protein O-glucosyltransferase. Catalyzes the reaction that attaches glucose through an O-glycosidic linkage to a conserved serine residue found in the consensus sequence C-X-S-X-[PA]-C in epidermal growth factor-like repeats. Regulates Notch signaling by glucosylating Notch in the ER, glucosylation is required for the correct folding and cleavage of Notch. This is O-glucosyltransferase rumi from Drosophila pseudoobscura pseudoobscura (Fruit fly).